The following is a 331-amino-acid chain: GTPase Obg (331 aa).

Positions 1-159 (MHFIDEVKIY…MWIHLRLKLL (159 aa)) constitute an Obg domain. In terms of domain architecture, OBG-type G spans 160–327 (SDVGLIGLPN…IVKLALEIIK (168 aa)). Residues 166-173 (GLPNAGKS), 191-195 (FTTLV), 212-215 (DIPG), 279-282 (NKCD), and 308-310 (STY) contribute to the GTP site. Mg(2+)-binding residues include S173 and T193.

It belongs to the TRAFAC class OBG-HflX-like GTPase superfamily. OBG GTPase family. In terms of assembly, monomer. The cofactor is Mg(2+).

It is found in the cytoplasm. An essential GTPase which binds GTP, GDP and possibly (p)ppGpp with moderate affinity, with high nucleotide exchange rates and a fairly low GTP hydrolysis rate. Plays a role in control of the cell cycle, stress response, ribosome biogenesis and in those bacteria that undergo differentiation, in morphogenesis control. The polypeptide is GTPase Obg (Rickettsia prowazekii (strain Madrid E)).